Here is a 178-residue protein sequence, read N- to C-terminus: Cytochrome b6-f complex iron-sulfur subunit 2 (178 aa).

The chain crosses the membrane as a helical span at residues 17–36 (LLNFFTGAIVAATASAAIYP). Positions 61–161 (GHPIPASQIL…VQVKDDYIWI (101 aa)) constitute a Rieske domain. The [2Fe-2S] cluster site is built by Cys107, His109, Cys125, and His128. Cys112 and Cys127 are joined by a disulfide.

Belongs to the Rieske iron-sulfur protein family. The 4 large subunits of the cytochrome b6-f complex are cytochrome b6, subunit IV (17 kDa polypeptide, PetD), cytochrome f and the Rieske protein, while the 4 small subunits are PetG, PetL, PetM and PetN. The complex functions as a dimer. It depends on [2Fe-2S] cluster as a cofactor.

The protein localises to the cellular thylakoid membrane. It catalyses the reaction 2 oxidized [plastocyanin] + a plastoquinol + 2 H(+)(in) = 2 reduced [plastocyanin] + a plastoquinone + 4 H(+)(out). Its function is as follows. Component of the cytochrome b6-f complex, which mediates electron transfer between photosystem II (PSII) and photosystem I (PSI), cyclic electron flow around PSI, and state transitions. This is Cytochrome b6-f complex iron-sulfur subunit 2 from Trichormus variabilis (strain ATCC 29413 / PCC 7937) (Anabaena variabilis).